The chain runs to 547 residues: RNA polymerase sigma factor sigF, chloroplastic (547 aa).

Residues 1–17 (MEATRNLVSSSPSFQTK) are compositionally biased toward polar residues. 2 disordered regions span residues 1 to 28 (MEATRNLVSSSPSFQTKTHLKSSYSSPS) and 54 to 79 (FPASVLSQEPREESRPLSHALRDDRT). The N-terminal 55 residues, 1–55 (MEATRNLVSSSPSFQTKTHLKSSYSSPSSVVMLHDQTTTPVVNSRHLNSLSRHFP), are a transit peptide targeting the chloroplast. Basic and acidic residues predominate over residues 62-79 (EPREESRPLSHALRDDRT). Phosphoserine; by CK2 occurs at positions 94, 95, 174, 176, 177, and 180. The interval 163–226 (ANPSDNIKDS…QKTSAKKKYK (64 aa)) is disordered. A compositionally biased stretch (low complexity) spans 172–181 (SLSTSSSMSL). Thr-249 carries the phosphothreonine; by CK2 modification. The Polymerase core binding motif lies at 335–348 (DLLQEGSMGLMKSV). The H-T-H motif DNA-binding region spans 505–524 (LSEIGEIYGLSKERVRQLES).

The protein belongs to the sigma-70 factor family. Interacts (via N-terminus) with DG1 (via C-terminus). Phosphorylated to acquire sigma activity; site-specific phosphorylation regulates promoter affinity. Phosphorylation at Ser-174 by chloroplastic CK2 requires prior phosphorylation at Ser-177. Phosphorylation at either Ser-94, Ser-95 or Ser-174 is required for sigma activation. In terms of tissue distribution, expressed in seedling, accumulating progressively. Present in leaves but not in roots.

It localises to the plastid. The protein resides in the chloroplast. Its function is as follows. Sigma factors are initiation factors that promote the attachment of plastid-encoded RNA polymerase (PEP) to specific initiation sites and are then released. Regulates transcription in chloroplast in a DG1-dependent manner. Involved in light-dependent chloroplast development. Required during early plant development and primary leaf formation. The chain is RNA polymerase sigma factor sigF, chloroplastic (SIGF) from Arabidopsis thaliana (Mouse-ear cress).